A 409-amino-acid polypeptide reads, in one-letter code: 4-hydroxy-3-methylbut-2-en-1-yl diphosphate synthase (flavodoxin) (409 aa).

Residues C298, C301, C344, and E351 each coordinate [4Fe-4S] cluster.

This sequence belongs to the IspG family. The cofactor is [4Fe-4S] cluster.

The enzyme catalyses (2E)-4-hydroxy-3-methylbut-2-enyl diphosphate + oxidized [flavodoxin] + H2O + 2 H(+) = 2-C-methyl-D-erythritol 2,4-cyclic diphosphate + reduced [flavodoxin]. The protein operates within isoprenoid biosynthesis; isopentenyl diphosphate biosynthesis via DXP pathway; isopentenyl diphosphate from 1-deoxy-D-xylulose 5-phosphate: step 5/6. In terms of biological role, converts 2C-methyl-D-erythritol 2,4-cyclodiphosphate (ME-2,4cPP) into 1-hydroxy-2-methyl-2-(E)-butenyl 4-diphosphate. This is 4-hydroxy-3-methylbut-2-en-1-yl diphosphate synthase (flavodoxin) from Dechloromonas aromatica (strain RCB).